Here is a 117-residue protein sequence, read N- to C-terminus: Elafin (117 aa).

The N-terminal stretch at 1–22 (MRASSFLIVVVFLIAGTLVLEA) is a signal peptide. Residues 23–60 (AVTGVPVKGQDTVKGRVPFNGQDPVKGQVSVKGQDKVK) constitute a propeptide that is removed on maturation. SVP-1 clotting repeat units lie at residues 29-54 (VKGQ…VSVK) and 55-72 (GQDK…VSTK). The 2 X tandem repeats of SVP-1 like motif stretch occupies residues 29–72 (VKGQDTVKGRVPFNGQDPVKGQVSVKGQDKVKAQEPVKGPVSTK). The WAP domain maps to 69–117 (VSTKPGSCPIILIRCAMLNPPNRCLKDTDCPGIKKCCEGSCGMACFVPQ). 4 disulfide bridges follow: Cys-76–Cys-105, Cys-83–Cys-109, Cys-92–Cys-104, and Cys-98–Cys-113.

It is found in the secreted. Its function is as follows. Neutrophil and pancreatic elastase-specific inhibitor of skin. It may prevent elastase-mediated tissue proteolysis. Has been shown to inhibit the alpha-4-beta-2/CHRNA2-CHRNB2 nicotinic acetylcholine receptor and to produce a weak inhibition on Kv11.1/KCNH2/ERG1 and on the transient receptor potential cation channel subfamily V member 1 (TRPV1). The chain is Elafin (PI3) from Homo sapiens (Human).